A 1531-amino-acid chain; its full sequence is Nuclear factor of activated T-cells 5 (1531 aa).

2 disordered regions span residues 34-89 (ELQL…TSSS) and 114-141 (VSNR…RHTV). The span at 41-51 (RETSVASMSQT) shows a compositional bias: polar residues. The span at 63 to 89 (VVAADASSAPSSSSMGGACSSFTTSSS) shows a compositional bias: low complexity. A Phosphoserine modification is found at Ser120. Position 122 is an N6-acetyllysine (Lys122). Positions 122-134 (KQLTSNTVQQHPS) are enriched in polar residues. Phosphoserine is present on Ser134. The residue at position 135 (Thr135) is a Phosphothreonine; by CDK5. At Ser155 the chain carries Phosphoserine. Disordered stretches follow at residues 175 to 220 (WMED…CEES) and 241 to 265 (TTDN…GVKK). Over residues 179-192 (SPSNFSNMSTSSYN) the composition is skewed to low complexity. A compositionally biased stretch (basic residues) spans 200–212 (KSRKRNPKQRPGV). Over residues 241–260 (TTDNKGNSKAGNGTLENQKG) the composition is skewed to polar residues. In terms of domain architecture, RHD spans 264 to 443 (KKSPMLCGQY…SPILCTQPAG (180 aa)). The DNA-binding element occupies 293–300 (RARYLTEG). Lys556 participates in a covalent cross-link: Glycyl lysine isopeptide (Lys-Gly) (interchain with G-Cter in SUMO1); alternate. Lys556 participates in a covalent cross-link: Glycyl lysine isopeptide (Lys-Gly) (interchain with G-Cter in SUMO2); alternate. Ser561 bears the Phosphoserine mark. Glycyl lysine isopeptide (Lys-Gly) (interchain with G-Cter in SUMO2) cross-links involve residues Lys573 and Lys603. Disordered stretches follow at residues 640–666 (NIAG…QQIQ), 841–891 (VSPG…QVME), 958–996 (PPAV…TGTQ), 1211–1304 (PQVA…QEQQ), 1316–1371 (APMN…QEQQ), and 1473–1502 (ISQP…SPLA). Low complexity predominate over residues 646 to 656 (SFSSPSSSHLP). Polar residues-rich tracts occupy residues 841 to 852 (VSPGMFSSTEPT) and 869 to 878 (HPQSENTLSN). Composition is skewed to low complexity over residues 879–888 (QQQQQQQQQQ) and 960–980 (AVSG…PGTT). Polar residues-rich tracts occupy residues 981–996 (MFQT…TGTQ) and 1224–1247 (PQSQ…NSPS). The span at 1248-1266 (QEQQQQQQQQQQQQQQQQQ) shows a compositional bias: low complexity. Composition is skewed to polar residues over residues 1267-1278 (SILFSNQNTMAT) and 1291-1304 (FNPN…QEQQ). A compositionally biased stretch (low complexity) spans 1320-1330 (QEQQPMQFQSQ). Residues 1331-1371 (STVSSLQNPGPTQSESSQTPLFHSSPQIQLVQGSPSSQEQQ) show a composition bias toward polar residues. Over residues 1475-1486 (QPGQPQNEGQPP) the composition is skewed to low complexity. Positions 1487–1502 (VTTLLSQQMPENSPLA) are enriched in polar residues.

As to quaternary structure, homodimer when bound to DNA, completely encircles its DNA target. Interacts with CIDEC; this interaction is direct and retains NFAT5 in the cytoplasm. Does not bind with Fos and Jun transcription factors. Interacts with DDX5 and DDX17; this interaction leads to DDX5/DDX17 recruitment to LNC2 and S100A4 promoters and NFAT5-mediated DDX5/DDX17-enhanced transactivation. In terms of processing, phosphorylated. Phosphorylated at Thr-135 by CDK5 in response to osmotic stress; this phosphorylation mediates its rapid nuclear localization. Post-translationally, poly-ADP-ribosylated by PARP1 in response to DNA damage, promoting recruitment to sites of R-loop-associated DNA damage. In terms of tissue distribution, widely expressed, with highest levels in skeletal muscle, brain, heart and peripheral blood leukocytes.

The protein resides in the nucleus. It is found in the cytoplasm. The protein localises to the chromosome. Its function is as follows. Transcription factor involved, among others, in the transcriptional regulation of osmoprotective and inflammatory genes. Binds the DNA consensus sequence 5'-[ACT][AG]TGGAAA[CAT]A[TA][ATC][CA][ATG][GT][GAC][CG][CT]-3'. Mediates the transcriptional response to hypertonicity. Positively regulates the transcription of LCN2 and S100A4 genes; optimal transactivation of these genes requires the presence of DDX5/DDX17. Also involved in the DNA damage response by preventing formation of R-loops; R-loops are composed of a DNA:RNA hybrid and the associated non-template single-stranded DNA. This is Nuclear factor of activated T-cells 5 from Homo sapiens (Human).